Reading from the N-terminus, the 156-residue chain is Aspartate carbamoyltransferase regulatory chain (156 aa).

4 residues coordinate Zn(2+): C109, C114, C140, and C143.

It belongs to the PyrI family. Contains catalytic and regulatory chains. Zn(2+) is required as a cofactor.

Functionally, involved in allosteric regulation of aspartate carbamoyltransferase. The sequence is that of Aspartate carbamoyltransferase regulatory chain from Methanosarcina barkeri (strain Fusaro / DSM 804).